The following is a 587-amino-acid chain: Sedolisin (587 aa).

The N-terminal stretch at 1 to 32 is a signal peptide; sequence MKSSAAKQTVLCLNRYAVVALPLAIASFAAFG. Residues 33 to 215 constitute a propeptide, removed in mature form; the sequence is ASPASTLWAP…VGERSAAKTL (183 aa). Residues 219–583 enclose the Peptidase S53 domain; that stretch reads TAKGHNPTEF…AKLSAYIRSN (365 aa). The tract at residues 276–295 is disordered; that stretch reads TIQTGSSNGDYSDDQQGQGE. Catalysis depends on charge relay system residues E295 and D299. The cysteines at positions 352 and 391 are disulfide-linked. The active-site Charge relay system is the S502. The Ca(2+) site is built by D543, V544, G559, G561, and D563. A propeptide spans 586–587 (removed in mature form); the sequence is GH.

It depends on Ca(2+) as a cofactor. Post-translationally, autocatalytically processed.

The protein resides in the periplasm. The enzyme catalyses Hydrolysis of the B chain of insulin at 13-Glu-|-Ala-14, 15-Leu-|-Tyr-16 and 25-Phe-|-Tyr-26 and angiotensin I at 4-Tyr-|-Ile-5. A good synthetic substrate is Lys-Pro-Ile-Glu-Phe-|-Phe(NO2)-Arg-Leu.. Its activity is regulated as follows. Inhibited by 1,2-epoxy-3-(p-nitrophenoxy)propane (EPNP), but not by carboxyl proteinase inhibitors, such as pepstatin, pepstatin Ac (S-PI) and diazoacetyl-DL-norleucine methyl ester (DAN). Inhibited by tyrostatin, pseudo-tyrostatin, AcIPF, AcIAF, chymostatin and pseudo-iodotyrostatin. In terms of biological role, pepstatin-insensitive serine-carboxyl proteinase. In vitro can hydrolyze various synthetic peptides. Also shows activity on acid-denatured hemoglobin and on casein. In Pseudomonas sp. (strain 101) (Achromobacter parvulus T1), this protein is Sedolisin (pcp).